The chain runs to 234 residues: NAD-dependent protein deacylase (234 aa).

Residues 1–234 (MKNLVVLTGA…ELKQLLIPAP (234 aa)) form the Deacetylase sirtuin-type domain. 9 to 28 (GAGMSAESGISTFRDAGGLW) lines the NAD(+) pocket. The substrate site is built by Tyr-53 and Arg-56. 86-89 (QNVD) provides a ligand contact to NAD(+). The Proton acceptor role is filled by His-104. Position 175–177 (175–177 (GTS)) interacts with NAD(+).

Belongs to the sirtuin family. Class III subfamily.

The protein resides in the cytoplasm. It carries out the reaction N(6)-acetyl-L-lysyl-[protein] + NAD(+) + H2O = 2''-O-acetyl-ADP-D-ribose + nicotinamide + L-lysyl-[protein]. The enzyme catalyses N(6)-succinyl-L-lysyl-[protein] + NAD(+) + H2O = 2''-O-succinyl-ADP-D-ribose + nicotinamide + L-lysyl-[protein]. NAD-dependent lysine deacetylase and desuccinylase that specifically removes acetyl and succinyl groups on target proteins. Modulates the activities of several proteins which are inactive in their acylated form. The chain is NAD-dependent protein deacylase from Bacteroides thetaiotaomicron (strain ATCC 29148 / DSM 2079 / JCM 5827 / CCUG 10774 / NCTC 10582 / VPI-5482 / E50).